A 283-amino-acid chain; its full sequence is Pantothenate synthetase (283 aa).

ATP is bound at residue 34 to 41; that stretch reads MGALHDGH. His-41 functions as the Proton donor in the catalytic mechanism. (R)-pantoate is bound at residue Gln-65. Gln-65 contacts beta-alanine. Residue 152–155 coordinates ATP; the sequence is GEKD. A (R)-pantoate-binding site is contributed by Gln-158. ATP contacts are provided by residues Val-181 and 189–192; that span reads MSSR.

This sequence belongs to the pantothenate synthetase family. As to quaternary structure, homodimer.

The protein resides in the cytoplasm. It catalyses the reaction (R)-pantoate + beta-alanine + ATP = (R)-pantothenate + AMP + diphosphate + H(+). It participates in cofactor biosynthesis; (R)-pantothenate biosynthesis; (R)-pantothenate from (R)-pantoate and beta-alanine: step 1/1. Functionally, catalyzes the condensation of pantoate with beta-alanine in an ATP-dependent reaction via a pantoyl-adenylate intermediate. This Bradyrhizobium sp. (strain BTAi1 / ATCC BAA-1182) protein is Pantothenate synthetase.